The sequence spans 49 residues: Large ribosomal subunit protein bL33A (49 aa).

Positions 20 to 49 (KKNKRNNPDRVEFKKYCPRDKKSTLHRETK) are disordered. Residues 25–49 (NNPDRVEFKKYCPRDKKSTLHRETK) show a composition bias toward basic and acidic residues.

The protein belongs to the bacterial ribosomal protein bL33 family. Part of the 50S ribosomal subunit. Interacts with VmlR.

This is Large ribosomal subunit protein bL33A (rpmGA) from Bacillus subtilis (strain 168).